Reading from the N-terminus, the 150-residue chain is Azurin (150 aa).

The N-terminal stretch at 1–21 (MFKQVLGGMALMAAFSAPVLA) is a signal peptide. Residues 22–150 (AECSVDIAGT…LMKGTLKLVD (129 aa)) enclose the Plastocyanin-like domain. C24 and C47 are oxidised to a cystine. Cu cation is bound by residues H67, C133, H138, and M142.

The protein resides in the periplasm. The protein is Azurin of Bordetella bronchiseptica (strain ATCC BAA-588 / NCTC 13252 / RB50) (Alcaligenes bronchisepticus).